The following is a 406-amino-acid chain: Imidazolonepropionase (406 aa).

Positions 67 and 69 each coordinate Fe(3+). Zn(2+) contacts are provided by histidine 67 and histidine 69. 3 residues coordinate 4-imidazolone-5-propanoate: arginine 76, tyrosine 139, and histidine 172. Tyrosine 139 serves as a coordination point for N-formimidoyl-L-glutamate. Histidine 237 is a Fe(3+) binding site. Histidine 237 serves as a coordination point for Zn(2+). Position 240 (glutamine 240) interacts with 4-imidazolone-5-propanoate. Aspartate 312 is a binding site for Fe(3+). Residue aspartate 312 participates in Zn(2+) binding. N-formimidoyl-L-glutamate contacts are provided by asparagine 314 and glycine 316. Residue threonine 317 participates in 4-imidazolone-5-propanoate binding.

It belongs to the metallo-dependent hydrolases superfamily. HutI family. It depends on Zn(2+) as a cofactor. The cofactor is Fe(3+).

It is found in the cytoplasm. The catalysed reaction is 4-imidazolone-5-propanoate + H2O = N-formimidoyl-L-glutamate. It functions in the pathway amino-acid degradation; L-histidine degradation into L-glutamate; N-formimidoyl-L-glutamate from L-histidine: step 3/3. In terms of biological role, catalyzes the hydrolytic cleavage of the carbon-nitrogen bond in imidazolone-5-propanoate to yield N-formimidoyl-L-glutamate. It is the third step in the universal histidine degradation pathway. This chain is Imidazolonepropionase, found in Paraburkholderia phymatum (strain DSM 17167 / CIP 108236 / LMG 21445 / STM815) (Burkholderia phymatum).